The primary structure comprises 117 residues: Resistin-like gamma (117 aa).

An N-terminal signal peptide occupies residues 1–29 (MLTFNKMKTTTCSLLICISLLQLMVPVNT). Cystine bridges form between Cys61–Cys114, Cys73–Cys113, Cys82–Cys99, Cys84–Cys101, and Cys88–Cys103.

This sequence belongs to the resistin/FIZZ family. Homodimer. Heterodimer with RETNLB. As to expression, expressed in colon, lung, spleen, pancreas, ileum and bone marrow (at protein level). In colon, found throughout the crypt and surface epithelium, including goblet cells (at protein level). Highest expression is observed in bone marrow, spleen and lung, with lower levels in other tissues. Detected at low levels in granulocytes, but not found in monocytes or lymphocytes. Has very weak expression in white adipose tissue.

The protein resides in the secreted. Probable hormone. Promotes chemotaxis in myeloid cells. This chain is Resistin-like gamma, found in Mus musculus (Mouse).